Consider the following 392-residue polypeptide: 1-deoxy-D-xylulose 5-phosphate reductoisomerase (392 aa).

Residues Thr-14, Gly-15, Ser-16, Ile-17, Gly-40, Gln-43, and Asn-126 each coordinate NADPH. Position 127 (Lys-127) interacts with 1-deoxy-D-xylulose 5-phosphate. An NADPH-binding site is contributed by Glu-128. Residue Asp-150 participates in Mn(2+) binding. Positions 151, 152, 176, and 199 each coordinate 1-deoxy-D-xylulose 5-phosphate. Glu-152 is a Mn(2+) binding site. Gly-205 provides a ligand contact to NADPH. 1-deoxy-D-xylulose 5-phosphate is bound by residues Ser-212, Asn-217, Lys-218, and Glu-221. Position 221 (Glu-221) interacts with Mn(2+).

Belongs to the DXR family. Requires Mg(2+) as cofactor. Mn(2+) serves as cofactor.

The enzyme catalyses 2-C-methyl-D-erythritol 4-phosphate + NADP(+) = 1-deoxy-D-xylulose 5-phosphate + NADPH + H(+). Its pathway is isoprenoid biosynthesis; isopentenyl diphosphate biosynthesis via DXP pathway; isopentenyl diphosphate from 1-deoxy-D-xylulose 5-phosphate: step 1/6. Catalyzes the NADPH-dependent rearrangement and reduction of 1-deoxy-D-xylulose-5-phosphate (DXP) to 2-C-methyl-D-erythritol 4-phosphate (MEP). The sequence is that of 1-deoxy-D-xylulose 5-phosphate reductoisomerase from Corynebacterium glutamicum (strain ATCC 13032 / DSM 20300 / JCM 1318 / BCRC 11384 / CCUG 27702 / LMG 3730 / NBRC 12168 / NCIMB 10025 / NRRL B-2784 / 534).